Consider the following 493-residue polypeptide: MHLPSLSVALALVSSSLALPQTVLPESDVSSHAAAVKEAFSHAWDGYMKYAFPHDELLPISNSYGDSRNGWGASAVDALSTAIVMRNATIVNQILDHIAKIDYSKTSDTVSLFETTIRYLGGMLSGYDLLKGPAADLVKDSTKVDMLLQQSKNLGDVLKFAFDTPSGVPYNNINITSHGNDGATTNGLAVTGTLVLEWTRLSDLTGDQEYAKLSQRAESYLLAPQPSSGEPFPGLVGSEISIQTGQFTNGFVSWNGGSDSFYEYLMKMYVYDPKRFATYKDRWVAAAESSIDHLASSPASRPDLTFLATYNKGSLGLSSQHLACFDGGSYLLGGTVLDRADLIDFGLKLVDGCAETYHQTLTGIGPESFGWDEKSVPADQKEFYERAGFYVQSGAYILRPEVIESFYYAYRVTGKKQYRDWVWNAFVNINKYCRTGSGFAGLTDVNAVNGGNRYDNQESFLFAEVMKYAYLTHAPGMSPISIADEDKANESRG.

An N-terminal signal peptide occupies residues 1 to 18; sequence MHLPSLSVALALVSSSLA. N-linked (GlcNAc...) asparagine glycans are attached at residues N87 and N174. A disulfide bond links C324 and C353. E367 functions as the Proton donor in the catalytic mechanism. N489 carries N-linked (GlcNAc...) asparagine glycosylation.

The protein belongs to the glycosyl hydrolase 47 family. Monomer. It depends on Ca(2+) as a cofactor. Mg(2+) is required as a cofactor.

Its subcellular location is the cytoplasmic vesicle lumen. The enzyme catalyses N(4)-(alpha-D-Man-(1-&gt;2)-alpha-D-Man-(1-&gt;2)-alpha-D-Man-(1-&gt;3)-[alpha-D-Man-(1-&gt;2)-alpha-D-Man-(1-&gt;3)-[alpha-D-Man-(1-&gt;2)-alpha-D-Man-(1-&gt;6)]-alpha-D-Man-(1-&gt;6)]-beta-D-Man-(1-&gt;4)-beta-D-GlcNAc-(1-&gt;4)-beta-D-GlcNAc)-L-asparaginyl-[protein] (N-glucan mannose isomer 9A1,2,3B1,2,3) + 4 H2O = N(4)-(alpha-D-Man-(1-&gt;3)-[alpha-D-Man-(1-&gt;3)-[alpha-D-Man-(1-&gt;6)]-alpha-D-Man-(1-&gt;6)]-beta-D-Man-(1-&gt;4)-beta-D-GlcNAc-(1-&gt;4)-beta-D-GlcNAc)-L-asparaginyl-[protein] (N-glucan mannose isomer 5A1,2) + 4 beta-D-mannose. The catalysed reaction is N(4)-(alpha-D-Man-(1-&gt;2)-alpha-D-Man-(1-&gt;2)-alpha-D-Man-(1-&gt;3)-[alpha-D-Man-(1-&gt;3)-[alpha-D-Man-(1-&gt;2)-alpha-D-Man-(1-&gt;6)]-alpha-D-Man-(1-&gt;6)]-beta-D-Man-(1-&gt;4)-beta-D-GlcNAc-(1-&gt;4)-beta-D-GlcNAc)-L-asparaginyl-[protein] (N-glucan mannose isomer 8A1,2,3B1,3) + 3 H2O = N(4)-(alpha-D-Man-(1-&gt;3)-[alpha-D-Man-(1-&gt;3)-[alpha-D-Man-(1-&gt;6)]-alpha-D-Man-(1-&gt;6)]-beta-D-Man-(1-&gt;4)-beta-D-GlcNAc-(1-&gt;4)-beta-D-GlcNAc)-L-asparaginyl-[protein] (N-glucan mannose isomer 5A1,2) + 3 beta-D-mannose. Its pathway is protein modification; protein glycosylation. Involved in the maturation of Asn-linked oligosaccharides. Progressively trims alpha-1,2-linked mannose residues from Man(9)GlcNAc(2) to produce Man(5)GlcNAc(2). This Neosartorya fischeri (strain ATCC 1020 / DSM 3700 / CBS 544.65 / FGSC A1164 / JCM 1740 / NRRL 181 / WB 181) (Aspergillus fischerianus) protein is Probable mannosyl-oligosaccharide alpha-1,2-mannosidase 1B (mns1B).